Reading from the N-terminus, the 576-residue chain is Immunoglobulin mu heavy chain (576 aa).

Pyrrolidone carboxylic acid is present on Q1. 5 Ig-like domains span residues 1–97, 132–212, 236–334, 352–442, and 452–553; these read QVTL…TYYC, PTLF…EHVC, PKVS…QNAS, PSFA…QTIS, and PDVY…RTVD. Residues 1–124 are variable (V) domain, involved in antigen recognition; it reads QVTLTESGPA…VWGKGTTVTV (124 aa). 3 cysteine pairs are disulfide-bonded: C22–C97, C153–C212, and C259–C320. N74 and N170 each carry an N-linked (GlcNAc...) asparagine glycan. The interval 125–576 is constant (C) domain; that stretch reads SSGSASAPTL…VMSDTAGTCY (452 aa). N-linked (GlcNAc...) asparagine glycans are attached at residues N332, N395, and N402. Intrachain disulfides connect C367/C426 and C474/C536. N563 is a glycosylation site (N-linked (GlcNAc...) asparagine).

Immunoglobulins are composed of two identical heavy chains and two identical light chains; disulfide-linked. It is found almost exclusively as a homopentamer in the serum. Membrane-bound IgM molecules are non-covalently associated with heterodimer of CD79A and CD79B.

The protein resides in the secreted. The protein localises to the cell membrane. In terms of biological role, immunoglobulins, also known as antibodies, are membrane-bound or secreted glycoproteins produced by B lymphocytes. In the recognition phase of humoral immunity, the membrane-bound immunoglobulins serve as receptors which, upon binding of a specific antigen, trigger the clonal expansion and differentiation of B lymphocytes into immunoglobulins-secreting plasma cells. Secreted immunoglobulins mediate the effector phase of humoral immunity, which results in the elimination of bound antigens. The antigen binding site is formed by the variable domain of one heavy chain, together with that of its associated light chain. Thus, each immunoglobulin has two antigen binding sites with remarkable affinity for a particular antigen. The variable domains are assembled by a process called V-(D)-J rearrangement and can then be subjected to somatic hypermutations which, after exposure to antigen and selection, allow affinity maturation for a particular antigen. IgM antibodies play an important role in primary defense mechanisms. They have been shown to be involved in early recognition of external invaders like bacteria and viruses, cellular waste and modified self, as well as in recognition and elimination of precancerous and cancerous lesions. The membrane-bound form is found in the majority of normal B cells alongside with IgD. Membrane-bound IgM induces the phosphorylation of CD79A and CD79B by the Src family of protein tyrosine kinases. It may cause death of cells by apoptosis. It is also found in soluble form, which represents about 30% of the total serum immunoglobulins where it is found almost exclusively as a homopentamer. After the antigen binds to the B cell receptor, the secreted form is secreted in large amounts (, PubMed:16895553). This chain is Immunoglobulin mu heavy chain, found in Homo sapiens (Human).